The chain runs to 250 residues: 5-oxoprolinase subunit A (250 aa).

This sequence belongs to the LamB/PxpA family. As to quaternary structure, forms a complex composed of PxpA, PxpB and PxpC.

It carries out the reaction 5-oxo-L-proline + ATP + 2 H2O = L-glutamate + ADP + phosphate + H(+). Its function is as follows. Catalyzes the cleavage of 5-oxoproline to form L-glutamate coupled to the hydrolysis of ATP to ADP and inorganic phosphate. The polypeptide is 5-oxoprolinase subunit A (Thermus thermophilus (strain ATCC BAA-163 / DSM 7039 / HB27)).